A 165-amino-acid polypeptide reads, in one-letter code: Nucleotide-binding protein PMT9312_0481 (165 aa).

Belongs to the YajQ family.

Nucleotide-binding protein. This chain is Nucleotide-binding protein PMT9312_0481, found in Prochlorococcus marinus (strain MIT 9312).